The sequence spans 604 residues: Tyrosine-protein kinase transforming protein erbB (604 aa).

Residues 132-399 (FKKVKVLGSG…KMARDPPRYL (268 aa)) form the Protein kinase domain. Residues 138-146 (LGSGAFGTI) and Lys-165 contribute to the ATP site. Asp-257 (proton acceptor) is an active-site residue.

Belongs to the protein kinase superfamily. Tyr protein kinase family. EGF receptor subfamily.

It catalyses the reaction L-tyrosyl-[protein] + ATP = O-phospho-L-tyrosyl-[protein] + ADP + H(+). Its function is as follows. The v-erbB oncogene transforms avian fibroblasts and erythroblasts in culture and induces sarcomas and erythroleukemias in chickens. It is a truncated and mutated version of the receptor for epidermal growth factor. In Galliformes, this protein is Tyrosine-protein kinase transforming protein erbB (V-ERBB).